Reading from the N-terminus, the 443-residue chain is Xaa-Pro dipeptidase (443 aa).

Mn(2+) contacts are provided by aspartate 246, aspartate 257, histidine 339, glutamate 384, and glutamate 423.

Belongs to the peptidase M24B family. Bacterial-type prolidase subfamily. Requires Mn(2+) as cofactor.

It catalyses the reaction Xaa-L-Pro dipeptide + H2O = an L-alpha-amino acid + L-proline. In terms of biological role, splits dipeptides with a prolyl residue in the C-terminal position. This Escherichia coli O7:K1 (strain IAI39 / ExPEC) protein is Xaa-Pro dipeptidase.